The primary structure comprises 566 residues: Endoglucanase B (566 aa).

An N-terminal signal peptide occupies residues 1–30 (MKKRRSSKVILSLAIVVALLAAVEPNAALA). E177 functions as the Proton donor in the catalytic mechanism. The Nucleophile role is filled by E299.

It belongs to the glycosyl hydrolase 5 (cellulase A) family.

The enzyme catalyses Endohydrolysis of (1-&gt;4)-beta-D-glucosidic linkages in cellulose, lichenin and cereal beta-D-glucans.. In Paenibacillus lautus (Bacillus lautus), this protein is Endoglucanase B (celB).